Reading from the N-terminus, the 1342-residue chain is DNA-directed RNA polymerase subunit beta (1342 aa).

Belongs to the RNA polymerase beta chain family. The RNAP catalytic core consists of 2 alpha, 1 beta, 1 beta' and 1 omega subunit. When a sigma factor is associated with the core the holoenzyme is formed, which can initiate transcription.

It catalyses the reaction RNA(n) + a ribonucleoside 5'-triphosphate = RNA(n+1) + diphosphate. Functionally, DNA-dependent RNA polymerase catalyzes the transcription of DNA into RNA using the four ribonucleoside triphosphates as substrates. In Aliivibrio fischeri (strain MJ11) (Vibrio fischeri), this protein is DNA-directed RNA polymerase subunit beta.